A 470-amino-acid polypeptide reads, in one-letter code: Ribulose bisphosphate carboxylase large chain (470 aa).

Position 5 is an N6,N6,N6-trimethyllysine (lysine 5). 2 residues coordinate substrate: asparagine 114 and threonine 164. Lysine 166 (proton acceptor) is an active-site residue. A substrate-binding site is contributed by lysine 168. Residues lysine 192, aspartate 194, and glutamate 195 each coordinate Mg(2+). At lysine 192 the chain carries N6-carboxylysine. Histidine 285 (proton acceptor) is an active-site residue. Substrate is bound by residues arginine 286, histidine 318, and serine 370.

This sequence belongs to the RuBisCO large chain family. Type I subfamily. Heterohexadecamer of 8 large chains and 8 small chains; disulfide-linked. The disulfide link is formed within the large subunit homodimers. The cofactor is Mg(2+). Post-translationally, the disulfide bond which can form in the large chain dimeric partners within the hexadecamer appears to be associated with oxidative stress and protein turnover.

The protein resides in the plastid. Its subcellular location is the chloroplast. The enzyme catalyses 2 (2R)-3-phosphoglycerate + 2 H(+) = D-ribulose 1,5-bisphosphate + CO2 + H2O. The catalysed reaction is D-ribulose 1,5-bisphosphate + O2 = 2-phosphoglycolate + (2R)-3-phosphoglycerate + 2 H(+). Its function is as follows. RuBisCO catalyzes two reactions: the carboxylation of D-ribulose 1,5-bisphosphate, the primary event in carbon dioxide fixation, as well as the oxidative fragmentation of the pentose substrate in the photorespiration process. Both reactions occur simultaneously and in competition at the same active site. In Kigelia africana (Sausage tree), this protein is Ribulose bisphosphate carboxylase large chain.